Here is a 331-residue protein sequence, read N- to C-terminus: Aspartate carbamoyltransferase catalytic subunit (331 aa).

Carbamoyl phosphate-binding residues include Arg76 and Thr77. L-aspartate is bound at residue Lys104. The carbamoyl phosphate site is built by Arg126, His154, and Gln157. The L-aspartate site is built by Arg187 and Arg246. Carbamoyl phosphate-binding residues include Gly287 and Pro288.

It belongs to the aspartate/ornithine carbamoyltransferase superfamily. ATCase family. Heterododecamer (2C3:3R2) of six catalytic PyrB chains organized as two trimers (C3), and six regulatory PyrI chains organized as three dimers (R2).

It carries out the reaction carbamoyl phosphate + L-aspartate = N-carbamoyl-L-aspartate + phosphate + H(+). Its pathway is pyrimidine metabolism; UMP biosynthesis via de novo pathway; (S)-dihydroorotate from bicarbonate: step 2/3. Its function is as follows. Catalyzes the condensation of carbamoyl phosphate and aspartate to form carbamoyl aspartate and inorganic phosphate, the committed step in the de novo pyrimidine nucleotide biosynthesis pathway. In Dehalococcoides mccartyi (strain CBDB1), this protein is Aspartate carbamoyltransferase catalytic subunit.